A 222-amino-acid chain; its full sequence is Probable GTP-binding protein EngB (222 aa).

The 195-residue stretch at N23–G217 folds into the EngB-type G domain. Residues G31–S38, G57–L61, D82–G85, T152–D155, and F191–A193 contribute to the GTP site. Positions 38 and 59 each coordinate Mg(2+).

This sequence belongs to the TRAFAC class TrmE-Era-EngA-EngB-Septin-like GTPase superfamily. EngB GTPase family. Mg(2+) serves as cofactor.

Functionally, necessary for normal cell division and for the maintenance of normal septation. This Helicobacter hepaticus (strain ATCC 51449 / 3B1) protein is Probable GTP-binding protein EngB.